Consider the following 239-residue polypeptide: Uridylate kinase (239 aa).

13–16 (KVSG) contributes to the ATP binding site. Gly-55 lines the UMP pocket. Gly-56 and Arg-60 together coordinate ATP. UMP is bound by residues Asp-75 and 136–143 (TGNPFFTT). ATP is bound by residues Thr-163, Gln-164, Tyr-169, and Asp-172.

It belongs to the UMP kinase family. As to quaternary structure, homohexamer.

The protein localises to the cytoplasm. It carries out the reaction UMP + ATP = UDP + ADP. Its pathway is pyrimidine metabolism; CTP biosynthesis via de novo pathway; UDP from UMP (UMPK route): step 1/1. Inhibited by UTP. In terms of biological role, catalyzes the reversible phosphorylation of UMP to UDP. The polypeptide is Uridylate kinase (Bartonella bacilliformis (strain ATCC 35685 / KC583 / Herrer 020/F12,63)).